The following is a 576-amino-acid chain: Proline--tRNA ligase (576 aa).

The protein belongs to the class-II aminoacyl-tRNA synthetase family. ProS type 1 subfamily. In terms of assembly, homodimer.

It is found in the cytoplasm. The enzyme catalyses tRNA(Pro) + L-proline + ATP = L-prolyl-tRNA(Pro) + AMP + diphosphate. Catalyzes the attachment of proline to tRNA(Pro) in a two-step reaction: proline is first activated by ATP to form Pro-AMP and then transferred to the acceptor end of tRNA(Pro). As ProRS can inadvertently accommodate and process non-cognate amino acids such as alanine and cysteine, to avoid such errors it has two additional distinct editing activities against alanine. One activity is designated as 'pretransfer' editing and involves the tRNA(Pro)-independent hydrolysis of activated Ala-AMP. The other activity is designated 'posttransfer' editing and involves deacylation of mischarged Ala-tRNA(Pro). The misacylated Cys-tRNA(Pro) is not edited by ProRS. In Psychrobacter sp. (strain PRwf-1), this protein is Proline--tRNA ligase.